Consider the following 114-residue polypeptide: Chaperone protein YscY (114 aa).

As to quaternary structure, binds to YscX.

It localises to the cytoplasm. Required for Yop secretion. Functions probably as a chaperone which stabilizes YscX within the cell, before its secretion. The protein is Chaperone protein YscY (yscY) of Yersinia enterocolitica serotype O:8 / biotype 1B (strain NCTC 13174 / 8081).